Reading from the N-terminus, the 37-residue chain is Large ribosomal subunit protein bL36A (37 aa).

It belongs to the bacterial ribosomal protein bL36 family.

The chain is Large ribosomal subunit protein bL36A from Actinobacillus pleuropneumoniae serotype 3 (strain JL03).